Consider the following 95-residue polypeptide: MLNVNEYFAGKVKSIGYDSGSIGRASVGVMEKGEYTFTTDRPEEMTVVTGALRVLIPGAPDWQVFTPGETFFVPERSEFNLQVAEPSAYLCKYLS.

It belongs to the nucleoside phosphorylase PpnP family.

It carries out the reaction a purine D-ribonucleoside + phosphate = a purine nucleobase + alpha-D-ribose 1-phosphate. The enzyme catalyses adenosine + phosphate = alpha-D-ribose 1-phosphate + adenine. It catalyses the reaction cytidine + phosphate = cytosine + alpha-D-ribose 1-phosphate. The catalysed reaction is guanosine + phosphate = alpha-D-ribose 1-phosphate + guanine. It carries out the reaction inosine + phosphate = alpha-D-ribose 1-phosphate + hypoxanthine. The enzyme catalyses thymidine + phosphate = 2-deoxy-alpha-D-ribose 1-phosphate + thymine. It catalyses the reaction uridine + phosphate = alpha-D-ribose 1-phosphate + uracil. The catalysed reaction is xanthosine + phosphate = alpha-D-ribose 1-phosphate + xanthine. Its function is as follows. Catalyzes the phosphorolysis of diverse nucleosides, yielding D-ribose 1-phosphate and the respective free bases. Can use uridine, adenosine, guanosine, cytidine, thymidine, inosine and xanthosine as substrates. Also catalyzes the reverse reactions. The chain is Pyrimidine/purine nucleoside phosphorylase from Edwardsiella ictaluri (strain 93-146).